The sequence spans 129 residues: Lysozyme C-2 (129 aa).

In terms of domain architecture, C-type lysozyme spans 1-129; sequence KVFERCELAR…VSSYVEGCTL (129 aa). 4 disulfides stabilise this stretch: C6–C127, C30–C115, C65–C81, and C77–C95. Residues E35 and D53 contribute to the active site.

Belongs to the glycosyl hydrolase 22 family. In terms of assembly, monomer.

It catalyses the reaction Hydrolysis of (1-&gt;4)-beta-linkages between N-acetylmuramic acid and N-acetyl-D-glucosamine residues in a peptidoglycan and between N-acetyl-D-glucosamine residues in chitodextrins.. Lysozymes have primarily a bacteriolytic function; those in tissues and body fluids are associated with the monocyte-macrophage system and enhance the activity of immunoagents. This Capra hircus (Goat) protein is Lysozyme C-2.